The chain runs to 45 residues: Proteinase inhibitor IIA (45 aa).

3 cysteine pairs are disulfide-bonded: Cys10-Cys24, Cys14-Cys35, and Cys20-Cys43.

This sequence belongs to the protease inhibitor I20 (potato type II proteinase inhibitor) family.

It localises to the secreted. Its function is as follows. Inhibits trypsin strongly and chymotrypsin temporarily. The protein is Proteinase inhibitor IIA of Solanum tuberosum (Potato).